The chain runs to 58 residues: NADH dehydrogenase [ubiquinone] 1 beta subcomplex subunit 1 (58 aa).

The chain crosses the membrane as a helical span at residues His11–Leu27.

It belongs to the complex I NDUFB1 subunit family. As to quaternary structure, complex I is composed of 45 different subunits.

Its subcellular location is the mitochondrion inner membrane. In terms of biological role, accessory subunit of the mitochondrial membrane respiratory chain NADH dehydrogenase (Complex I) that is believed not to be involved in catalysis. Complex I functions in the transfer of electrons from NADH to the respiratory chain. The immediate electron acceptor for the enzyme is believed to be ubiquinone. This chain is NADH dehydrogenase [ubiquinone] 1 beta subcomplex subunit 1 (NDUFB1), found in Homo sapiens (Human).